Consider the following 161-residue polypeptide: 2-C-methyl-D-erythritol 2,4-cyclodiphosphate synthase (161 aa).

Residues aspartate 8 and histidine 10 each contribute to the a divalent metal cation site. Residues aspartate 8–histidine 10 and histidine 34–serine 35 each bind 4-CDP-2-C-methyl-D-erythritol 2-phosphate. A divalent metal cation is bound at residue histidine 42. 4-CDP-2-C-methyl-D-erythritol 2-phosphate is bound by residues aspartate 56–glycine 58, alanine 100–leucine 106, and arginine 142.

The protein belongs to the IspF family. In terms of assembly, homotrimer. It depends on a divalent metal cation as a cofactor.

It catalyses the reaction 4-CDP-2-C-methyl-D-erythritol 2-phosphate = 2-C-methyl-D-erythritol 2,4-cyclic diphosphate + CMP. It participates in isoprenoid biosynthesis; isopentenyl diphosphate biosynthesis via DXP pathway; isopentenyl diphosphate from 1-deoxy-D-xylulose 5-phosphate: step 4/6. Involved in the biosynthesis of isopentenyl diphosphate (IPP) and dimethylallyl diphosphate (DMAPP), two major building blocks of isoprenoid compounds. Catalyzes the conversion of 4-diphosphocytidyl-2-C-methyl-D-erythritol 2-phosphate (CDP-ME2P) to 2-C-methyl-D-erythritol 2,4-cyclodiphosphate (ME-CPP) with a corresponding release of cytidine 5-monophosphate (CMP). The chain is 2-C-methyl-D-erythritol 2,4-cyclodiphosphate synthase from Buchnera aphidicola subsp. Acyrthosiphon pisum (strain 5A).